Here is a 3122-residue protein sequence, read N- to C-terminus: MATMQAASCPEERGRRARPDPEAGDPSPPVLLLSHFCGVPFLCFGDVRVGTSRTRSLVLHNPHEEPLQVELSLLRAAGQGFSVAPNRCELKPKEKLTISVTWTPLREGGVREIVTFLVNDFLKHQAILLGNAEEPKKKKRSLWNTSKKIPASSKHTKRTSKNQHFNESFTISQKDRIRSPLQPCENLAMSECSSPTENKVPTPSISPIRECQSETCLPLFLRESTAYSSLHESENTQNLKVQDASISQTFDFNEEVANETFINPISVCHQSEGDRKLTLAPNCSSPLNSTQTQIHFLSPDSFVNNRYTSDNDLKSMKNVLSDTFRKDPAESVCLESQTVHEVCQTILSPDSFLNDNYGLKKGLNFKSVNPVLSPTQFVKDSMGHVGQQTGKSNEASQDWRINEGLAYTPECQHAQTPSSRSEKQNPVEVKPHTYDFTKQKPKISEFQDAFCHQSKQPHKRRPILSATVTKRKPTNAREKLPEINKPDAKRCLEGLVGERGKEVGSLREKGFHSSLPVVEPGVSKALSYRDEVTPATVVVARKRKSHGTVGDANGKVAAEEWMDMCEVKRIHFSPLESTPSTVARTTKKEGHTSKRISSLERSGLKKKMDSSILKTPLSKTKKKRRSIVAVAQSHLTFIKPLKAAIPRHPMPFAAKNMFYDERWKEKQEQGFTWWLNYILTPDDFTVKTNVSKVNAASLVLGAESQHKISVPKAPTKEEVSLRAYTASCRLNRLRRTACSLFTSEKMVKAIKKVEIEIEVGRLLVRKDRHLWKDIGQRQKVLNWLLSYNPLWLRIGLETVFGELIPLADNSDVTGLAMFILNRLLWNPDIAAEYRHPTVPLLFRDGHEAALSKFTLKKLLLLICFLDHAKISRLIDHDPCLFCKDAEFKASKELLLAFSRDFLSGEGDLSRHLSFLGLPVSHVQTPLDEFDFAVTNLAVDLQCGVRLVRTVELLTQNWNLSDKLRIPAISRVQKMHNVDLVLQVLKSRGVPLTDEHGSAISSKDVVDRHREKTLGLLWKIALAFQVDISLNLDQLKEEIDFLKHTHSIKRAMSALTCPSQAITNKQRDKRISGNFERYGDSVQLLMDWVNAVCAFYNKKVENFTVSFSDGRILCYLIHHYHPCYVPFDAICQRTSQSVACAQTGSVVLNSSSESEGGCLDLSLEALDHESTPEMYKELLENEKKNFHLVRSAARDLGGIPAMIHHSDMSNTIPDEKVVITYLSFLCARLLDLRKEIRAARLIQTTWRKYKLKRDLKHHQERDKAARVIQSVVLNFLSRRRLQKNVSAALVIQKCWRRVSAQRKLRMLKNEKLAKLQNKSAVLIQAYWRRYSTRKRFLRLKHYSVILQSRIRMKIALTSYKRYLWATVTIQRHWRAYLSRKRDQQIFRKLKSSSLVIQFMFRRWKRRKLQLQTKAAVTLQRAFREWHLRKQIRERSAVVIQSWYRMHRELQKYIYIRSCVIVIQRRVRCFQAQKLYKRRKDAILTLQKHYRARQKGKLAHADYLQKRAATIRLQAAFRGMKARHSYRLQIGAACVLQSYWRMRQERVRFLNLKKMVIKLQAHIRKYQQLQKYKKIKKAAITIQTHFRASISARRVLASYQKTRSSVIVLQSACRGMQARKAFRHALASVIKIQSYYRAYICRKTFQNFKNATIKLQSIVKMKQSRKQYLQIRAAALFIQRWYRSQKLASQKRKEYIQVRESCIKLQSHFRGCLVRKQLRLQCKAAISLQSYFRMRTARQRYLKMCKAALVIQSFYCAYRAQISQRKNFLQVKRAAICLQAAYRGCKVRRQIKQQSTAAVTIQRVFRGHSQRMKYQTMLQSAVKIQRWYRAQKVAYDMRIQFLKTREAVVCLQSAYRGWQVRQQLRRQHEAAVKIQSTFRMAVAQQQYKLLRAAAAVIQQHVRARAAGKRQHLAYIQLRHAALVFQAAWKGKMLRRQIARQHQCAALIQSYYRMHIQRRKWSIMKTAALQIQLCYRAYKVGKEQRHLYLKTKAAVVTLQSAYRGMKVRKRVAECHKAAVTIQSKFRAYRTQKKYTTYRTSAIVIQRWYRNIKITTQQHQEYLNLRRAAVQVQAAYRGIRVRRRIQHMHMAATLIEAMFKMRQSRVRYLKMRTAALIIQVRYRAYYLGKIQHEKYLRTLKAIKTLQAGVRGARVRRTVRKMHFAATLIQSHFRGHRQQTYFHRLRKAATMVQQRYRAVKEGSAEFQRYSRLRRSVLLIQAAFRGLRTRRHLKAMHLAATLIQRRFRTFAMRRKFLSLRKTAIWIQRQYRARLYAKYSRQQLLLEKAVIKIQSSYRGWVVRKRVQKMHRAATVIQATFRMHGAYMRYQHLKRASVVIQVHTAAELQRQKHAAVILQAAVRGMKTRSHLKTMHSSATLIQSQFRAFIVRRRFIALRKAAIFVQRKFRATLYAKHKLHQFLQLRKAAITIQSSYRRLMVQKKLQEMHRAAALIQATFRMHRTYVAFHIWKCASIRIQQCYRTYRTIKLQKEKLIREEQHSAAVLIQSTYRMYRQRCFYQQRRWAAKVIQKTYRANKRRQDLLYVCKEETPLLQMHFQGLNTAKQGRQQHGAAMITQKHFRAFKARRLMEAERGFQAGCRKYKAKKYLSKVEAACRIQAWYRRWRAHKKYLTLLKAVNIIEGYLSAQLARRRFLKMRAAAIIIQRKWRATLSVRGARENLKRHRAACVIQAHFRGYQARQSFLQQRSAVLIIQRHVRAMVAAKQERIKYIKLKKSTVVVQALVRGWLVRKRVSEQKAKTRLFHFTAAAYCHMCALKIQRAYRLHVTLRNAKKHMDSVIFIQRWFRKRLQRKRFIEQYHKILSTRREAHACWLQQDRAASVIQKAVRRFLLCRRQEKITSCATRIQALWRGYSWRKKNDHTEIKAIRRSLRAVSTTVEEENKLYRRTERALHHLLTYKHLSAILDALKHLEVVTRLSPLCCENMAESGAVSTIFVVIRSCNRSVPCMEVVGYAVQVLLNVAKYDKTIAAVYEAENCVDTLLELLQVYREKPGDRVAEKSASIFTRTCCLLAVLLKTEQCAFDAQSRSKVTDRIYRLYKFTVPKHKVNTQGLFDKQKQNSCVGFPCIPERTMKTRLVSRLKPQWVLRRDNVEEITNSLQAIQLVMDTLGISY.

Disordered regions lie at residues Met1–Pro26 and Lys139–Phe169. Over residues Pro10–Pro21 the composition is skewed to basic and acidic residues. The segment at Ser289–Gln388 is sufficient for interaction with KATNA1:KATNB1. Phosphoserine occurs at positions 348, 373, and 573. The tract at residues Pro579–Glu600 is disordered. Positions Lys888–Gln1024 constitute a Calponin-homology (CH) 1 domain. A coiled-coil region spans residues Val1025–His1045. Residue Ser1071 is modified to Phosphoserine. The region spanning Gly1078–Leu1229 is the Calponin-homology (CH) 2 domain. 32 consecutive IQ domains span residues Glu1234–Ala1263, Gln1315–Gln1346, Gln1410–Gln1439, Lys1504–Gln1535, Leu1550–Thr1579, Thr1600–Lys1629, Ala1623–Lys1652, Val1696–Ser1725, Gln1719–Gln1750, Val1769–Thr1798, Gln1792–Lys1821, Thr1842–Lys1871, Gln1865–Gln1896, Leu1915–Gln1946, Gln1938–Gln1967, Thr1988–Thr2017, Cys2011–Gln2042, Leu2061–Glu2092, Thr2134–Gln2165, Met2157–Gln2188, Leu2207–Gln2238, Met2230–Gln2261, Leu2279–Gln2310, Met2302–Gln2333, Gln2343–Gln2374, Met2366–Gln2397, Leu2416–Gln2447, Gln2491–Gln2522, Lys2602–Glu2633, Arg2674–Gln2705, Leu2724–His2755, and Ile2849–Ser2880.

In terms of assembly, interacts with KATNA1 and KATNB1; katanin complex formation KATNA1:KATNB1 is required for the association. Expressed in fetal brain, peripheral nervous system, liver and spleen. In the adult, expressed exclusively in testis, ovary and spleen.

The protein resides in the cytoplasm. It localises to the cytoskeleton. Its subcellular location is the spindle. It is found in the nucleus. Functionally, involved in mitotic spindle regulation and coordination of mitotic processes. The function in regulating microtubule dynamics at spindle poles including spindle orientation, astral microtubule density and poleward microtubule flux seem to depend on its association with the katanin complex formed by KATNA1 and KATNB1. Enhances the microtubule lattice severing activity of KATNA1 by recruiting the katanin complex to microtubules. Can block microtubule minus-end growth and reversely this function can be enhanced by the katanin complex. May have a preferential role in regulating neurogenesis. The sequence is that of Abnormal spindle-like microcephaly-associated protein homolog (Aspm) from Mus musculus (Mouse).